A 429-amino-acid polypeptide reads, in one-letter code: Enolase (429 aa).

Q162 contacts (2R)-2-phosphoglycerate. The active-site Proton donor is E204. Residues D241, E283, and D310 each contribute to the Mg(2+) site. (2R)-2-phosphoglycerate contacts are provided by K335, R364, S365, and K386. The active-site Proton acceptor is K335.

It belongs to the enolase family. Mg(2+) serves as cofactor.

It localises to the cytoplasm. Its subcellular location is the secreted. The protein resides in the cell surface. The enzyme catalyses (2R)-2-phosphoglycerate = phosphoenolpyruvate + H2O. It functions in the pathway carbohydrate degradation; glycolysis; pyruvate from D-glyceraldehyde 3-phosphate: step 4/5. Functionally, catalyzes the reversible conversion of 2-phosphoglycerate (2-PG) into phosphoenolpyruvate (PEP). It is essential for the degradation of carbohydrates via glycolysis. In Mycobacterium tuberculosis (strain ATCC 25177 / H37Ra), this protein is Enolase.